The following is a 558-amino-acid chain: MRSDAIKKGHLRAPNRSLLRACGLKDEDFDKPFIGVANSYIDIIPGHYFLNDYAKIIKDEIRKNGCVPFEFNTIGVDDGIAMGHEGMLYSLPSRELIANSIETVMNAHQLDALICIPNCDKITPGMLMGALRVNVPTIFVSGGPMASGVTKKGEKISLSSVFEAVGAYESKKISEEEFKDIECSACPSGGSCSGMFTANSMNTLCEAMGIALEGNGTILALSKEREELLRKAARRICEIALDERFKIRNIITQKAVRNAMVVDMAMGGSSNTVLHMLAISREAGVALDIKDLNFISSKVAHIAKIAPSLNSVYMDDIHKAGGVSAVMAEISSRQGHILELDALTITGESLKERLKNAKIKDENIIRKVDNAYSKVGGLAILFGNLAKQGCVIKTAGIIGERKFKGKAVCFNSQDEAIKGIIKGKVQKGNVCVIRYEGPKGGPGMQEMLSPTSLLMGMGLGADVALITDGRFSGATRGLSVGHISPEAAEGGLIGLLKDGDEIEIDVDAYTIHANVSEEEIAKRKKEFALPQKEVSSRWLRMYQKLVSNASKGAVLDME.

Asp-78 serves as a coordination point for Mg(2+). Residue Cys-119 participates in [2Fe-2S] cluster binding. Residues Asp-120 and Lys-121 each contribute to the Mg(2+) site. At Lys-121 the chain carries N6-carboxylysine. Cys-192 provides a ligand contact to [2Fe-2S] cluster. Glu-446 provides a ligand contact to Mg(2+). Residue Ser-472 is the Proton acceptor of the active site.

This sequence belongs to the IlvD/Edd family. As to quaternary structure, homodimer. [2Fe-2S] cluster is required as a cofactor. It depends on Mg(2+) as a cofactor.

The catalysed reaction is (2R)-2,3-dihydroxy-3-methylbutanoate = 3-methyl-2-oxobutanoate + H2O. It carries out the reaction (2R,3R)-2,3-dihydroxy-3-methylpentanoate = (S)-3-methyl-2-oxopentanoate + H2O. The protein operates within amino-acid biosynthesis; L-isoleucine biosynthesis; L-isoleucine from 2-oxobutanoate: step 3/4. Its pathway is amino-acid biosynthesis; L-valine biosynthesis; L-valine from pyruvate: step 3/4. Functions in the biosynthesis of branched-chain amino acids. Catalyzes the dehydration of (2R,3R)-2,3-dihydroxy-3-methylpentanoate (2,3-dihydroxy-3-methylvalerate) into 2-oxo-3-methylpentanoate (2-oxo-3-methylvalerate) and of (2R)-2,3-dihydroxy-3-methylbutanoate (2,3-dihydroxyisovalerate) into 2-oxo-3-methylbutanoate (2-oxoisovalerate), the penultimate precursor to L-isoleucine and L-valine, respectively. The chain is Dihydroxy-acid dehydratase from Campylobacter jejuni subsp. jejuni serotype O:2 (strain ATCC 700819 / NCTC 11168).